The primary structure comprises 199 residues: Peptidyl-tRNA hydrolase (199 aa).

A tRNA-binding site is contributed by tyrosine 15. The Proton acceptor role is filled by histidine 20. Residues tyrosine 66, asparagine 68, and asparagine 114 each coordinate tRNA.

This sequence belongs to the PTH family. Monomer.

Its subcellular location is the cytoplasm. It carries out the reaction an N-acyl-L-alpha-aminoacyl-tRNA + H2O = an N-acyl-L-amino acid + a tRNA + H(+). In terms of biological role, hydrolyzes ribosome-free peptidyl-tRNAs (with 1 or more amino acids incorporated), which drop off the ribosome during protein synthesis, or as a result of ribosome stalling. Functionally, catalyzes the release of premature peptidyl moieties from peptidyl-tRNA molecules trapped in stalled 50S ribosomal subunits, and thus maintains levels of free tRNAs and 50S ribosomes. This chain is Peptidyl-tRNA hydrolase, found in Burkholderia multivorans (strain ATCC 17616 / 249).